The following is a 102-amino-acid chain: Integration host factor subunit beta (102 aa).

Belongs to the bacterial histone-like protein family. Heterodimer of an alpha and a beta chain.

Its function is as follows. This protein is one of the two subunits of integration host factor, a specific DNA-binding protein that functions in genetic recombination as well as in transcriptional and translational control. The sequence is that of Integration host factor subunit beta from Marinomonas sp. (strain MWYL1).